The chain runs to 491 residues: V-type proton ATPase subunit B 1 (491 aa).

Residue Arg-380 coordinates ATP.

The protein belongs to the ATPase alpha/beta chains family. As to quaternary structure, V-ATPase is a heteromultimeric enzyme made up of two complexes: the ATP-hydrolytic V1 complex and the proton translocation V0 complex. The V1 complex consists of three catalytic AB heterodimers that form a heterohexamer, three peripheral stalks each consisting of EG heterodimers, one central rotor including subunits D and F, and the regulatory subunits C and H. The proton translocation complex V0 consists of the proton transport subunit a, a ring of proteolipid subunits c9c'', rotary subunit d, subunits e and f, and the accessory subunits vah-19/Ac45 and vah-20/PRR. In terms of tissue distribution, expressed ubiquitously. Highly expressed in the H-shaped excretory cell, the excretory pore, the intestine, and hypodermal cells. Expressed in the nervous system. Expressed at low levels in muscles.

Non-catalytic subunit of the V1 complex of vacuolar(H+)-ATPase (V-ATPase), a multisubunit enzyme composed of a peripheral complex (V1) that hydrolyzes ATP and a membrane integral complex (V0) that translocates protons. V-ATPase is responsible for acidifying and maintaining the pH of intracellular compartments and in some cell types, is targeted to the plasma membrane, where it is responsible for acidifying the extracellular environment. Essential for the proper assembly and activity of V-ATPase. Required maternally for early embryogenesis and zygotically during morphogenesis. Specifically, involved in the clearance of apoptotic cell corpses in embryos. Also, during embryonic development, the V-ATPase is required to repress fusion of epidermal cells probably by negatively regulating eff-1-mediated cell fusion. In neurons, required for necrotic cell death by promoting intracellular acidification. Required for cell death induced by hypoxia. Required for acidification of synaptic vesicles and the release of neurotransmitters from adult neurons. The polypeptide is V-type proton ATPase subunit B 1 (Caenorhabditis elegans).